We begin with the raw amino-acid sequence, 263 residues long: Hydroxyacylglutathione hydrolase (263 aa).

Residues histidine 60, histidine 62, aspartate 64, histidine 65, histidine 120, aspartate 137, and histidine 175 each contribute to the Zn(2+) site.

Belongs to the metallo-beta-lactamase superfamily. Glyoxalase II family. As to quaternary structure, monomer. It depends on Zn(2+) as a cofactor.

The enzyme catalyses an S-(2-hydroxyacyl)glutathione + H2O = a 2-hydroxy carboxylate + glutathione + H(+). The protein operates within secondary metabolite metabolism; methylglyoxal degradation; (R)-lactate from methylglyoxal: step 2/2. In terms of biological role, thiolesterase that catalyzes the hydrolysis of S-D-lactoyl-glutathione to form glutathione and D-lactic acid. This is Hydroxyacylglutathione hydrolase from Shewanella pealeana (strain ATCC 700345 / ANG-SQ1).